The primary structure comprises 327 residues: Annexin A8 (327 aa).

4 Annexin repeats span residues 21-92, 93-164, 177-249, and 253-324; these read FNPD…ALMY, PPYR…CLLQ, GLAL…TVVK, and NLHS…SLVG. Residues Met266, Gly268, Gly270, and Asp310 each contribute to the Ca(2+) site.

Belongs to the annexin family.

Functionally, this protein is an anticoagulant protein that acts as an indirect inhibitor of the thromboplastin-specific complex, which is involved in the blood coagulation cascade. The protein is Annexin A8 of Homo sapiens (Human).